Reading from the N-terminus, the 442-residue chain is Chromosomal replication initiator protein DnaA (442 aa).

The interval 1-75 is domain I, interacts with DnaA modulators; it reads MDAWPRCLER…GNGEVALAVG (75 aa). A domain II region spans residues 75–104; it reads GSRPRAPEPLPAPQAVASAPAAAPIVPFAG. The tract at residues 105-322 is domain III, AAA+ region; sequence NLDSHYTFAN…GALNTLVARA (218 aa). The ATP site is built by glycine 150, glycine 152, lysine 153, and threonine 154. Positions 323 to 442 are domain IV, binds dsDNA; sequence NFTGRSITVE…WEKLIRKLSE (120 aa).

It belongs to the DnaA family. As to quaternary structure, oligomerizes as a right-handed, spiral filament on DNA at oriC.

It is found in the cytoplasm. Plays an essential role in the initiation and regulation of chromosomal replication. ATP-DnaA binds to the origin of replication (oriC) to initiate formation of the DNA replication initiation complex once per cell cycle. Binds the DnaA box (a 9 base pair repeat at the origin) and separates the double-stranded (ds)DNA. Forms a right-handed helical filament on oriC DNA; dsDNA binds to the exterior of the filament while single-stranded (ss)DNA is stabiized in the filament's interior. The ATP-DnaA-oriC complex binds and stabilizes one strand of the AT-rich DNA unwinding element (DUE), permitting loading of DNA polymerase. After initiation quickly degrades to an ADP-DnaA complex that is not apt for DNA replication. Binds acidic phospholipids. This chain is Chromosomal replication initiator protein DnaA, found in Xanthomonas campestris pv. campestris (strain 8004).